Here is a 145-residue protein sequence, read N- to C-terminus: RxLR effector protein BLR40 (145 aa).

The N-terminal stretch at 1–22 (MLLSRAISVVALLACICCGVHT) is a signal peptide. The RxLR-dEER signature appears at 44–58 (RRLRTSVDLVDNEER).

It belongs to the RxLR effector family.

Its subcellular location is the secreted. The protein localises to the host cell membrane. Functionally, secreted effector that triggers a robust hypersensitive response (HR) in Lactuca sativa cv. Design that is resistant to multiple B.lactucae races, including Bl:24. In Bremia lactucae (Lettuce downy mildew), this protein is RxLR effector protein BLR40.